The chain runs to 554 residues: CTP synthase (554 aa).

An amidoligase domain region spans residues 1–265 (MTPLIFVTGG…DELVIEQFKL (265 aa)). S13 provides a ligand contact to CTP. Residue S13 participates in UTP binding. ATP-binding positions include 14–19 (SLGKGI) and D71. Residues D71 and E139 each contribute to the Mg(2+) site. CTP contacts are provided by residues 146–148 (DIE), 186–191 (KTKPTQ), and K222. Residues 186–191 (KTKPTQ) and K222 each bind UTP. The Glutamine amidotransferase type-1 domain occupies 292–545 (NIAVVGKYVD…VRAAREKKAG (254 aa)). Residue G353 participates in L-glutamine binding. C380 functions as the Nucleophile; for glutamine hydrolysis in the catalytic mechanism. Residues 381 to 384 (YGMQ), E404, and R471 contribute to the L-glutamine site. Catalysis depends on residues H518 and E520.

Belongs to the CTP synthase family. As to quaternary structure, homotetramer.

It carries out the reaction UTP + L-glutamine + ATP + H2O = CTP + L-glutamate + ADP + phosphate + 2 H(+). The enzyme catalyses L-glutamine + H2O = L-glutamate + NH4(+). It catalyses the reaction UTP + NH4(+) + ATP = CTP + ADP + phosphate + 2 H(+). Its pathway is pyrimidine metabolism; CTP biosynthesis via de novo pathway; CTP from UDP: step 2/2. Allosterically activated by GTP, when glutamine is the substrate; GTP has no effect on the reaction when ammonia is the substrate. The allosteric effector GTP functions by stabilizing the protein conformation that binds the tetrahedral intermediate(s) formed during glutamine hydrolysis. Inhibited by the product CTP, via allosteric rather than competitive inhibition. Catalyzes the ATP-dependent amination of UTP to CTP with either L-glutamine or ammonia as the source of nitrogen. Regulates intracellular CTP levels through interactions with the four ribonucleotide triphosphates. In Xanthomonas euvesicatoria pv. vesicatoria (strain 85-10) (Xanthomonas campestris pv. vesicatoria), this protein is CTP synthase.